The chain runs to 285 residues: Methyl-CpG-binding domain protein 3 (285 aa).

In terms of domain architecture, MBD spans 1-69 (MERKRWECPA…STFDFRTGKM (69 aa)). Serine 56 bears the Phosphoserine mark. Lysine 73 participates in a covalent cross-link: Glycyl lysine isopeptide (Lys-Gly) (interchain with G-Cter in SUMO2). Serine 85 carries the phosphoserine modification. Residues lysine 90 and lysine 92 each participate in a glycyl lysine isopeptide (Lys-Gly) (interchain with G-Cter in SUMO2) cross-link. At serine 144 the chain carries Phosphoserine. Residues 221–279 (TDDDIRKQEELVQQVRKRLEEALMADMLAHVEELARDGEAPLDKACAEEEEEEEEEEEE) adopt a coiled-coil conformation. The span at 255–267 (ARDGEAPLDKACA) shows a compositional bias: basic and acidic residues. A disordered region spans residues 255 to 285 (ARDGEAPLDKACAEEEEEEEEEEEEPEPERV). A compositionally biased stretch (acidic residues) spans 268 to 285 (EEEEEEEEEEEEPEPERV).

As to quaternary structure, heterodimer (via N-terminus) with MBD2. Component of the MeCP1 histone deacetylase complex. Component of the nucleosome remodeling and deacetylase (NuRD) repressor complex, composed of core proteins MTA1, MTA2, MTA3, RBBP4, RBBP7, HDAC1, HDAC2, MBD2, MBD3, and peripherally associated proteins CDK2AP1, CDK2AP2, GATAD2A, GATAD2B, CHD3, CHD4 and CHD5. The exact stoichiometry of the NuRD complex is unknown, and some subunits such as MBD2 and MBD3, GATAD2A and GATAD2B, and CHD3, CHD4 and CHD5 define mutually exclusive NuRD complexes. Interacts with MBD3L2 (via N-terminus); the interaction is direct. Interacts with BCL6. Interacts with CDK2AP1. Interacts with HDAC1. Interacts with MTA2. Interacts with DNMT1. Interacts with GATAD2A. Interacts with GATAD2B. Does not interact with PWWP2A. Does not interact with PWWP2B. As to expression, highly expressed in brain, heart, kidney, liver, lung, skeletal muscle, spleen and testis. Detected at lower levels in embryonic stem cells.

It is found in the nucleus. Its subcellular location is the chromosome. Its function is as follows. Acts as a component of the histone deacetylase NuRD complex which participates in the remodeling of chromatin. Acts as transcriptional repressor and plays a role in gene silencing. Does not bind methylated DNA by itself. Binds to a lesser degree DNA containing unmethylated CpG dinucleotides. Recruits histone deacetylases and DNA methyltransferases. This Mus musculus (Mouse) protein is Methyl-CpG-binding domain protein 3 (Mbd3).